A 623-amino-acid polypeptide reads, in one-letter code: Keratin, type I cytoskeletal 9 (623 aa).

Low complexity predominate over residues 1-13; the sequence is MSCRQFSSSYLSR. A disordered region spans residues 1-25; the sequence is MSCRQFSSSYLSRSGGGGGGGLGSG. Residues 1–152 are head; it reads MSCRQFSSSY…GGDGGILTAN (152 aa). Phosphoserine is present on residues serine 14 and serine 57. A compositionally biased stretch (gly residues) spans 14–25; that stretch reads SGGGGGGGLGSG. The tract at residues 153–188 is coil 1A; it reads EKSTMQELNSRLASYLDKVQALEEANNDLENKIQDW. Residues 153–465 form the IF rod domain; the sequence is EKSTMQELNS…NLLEGGQEDF (313 aa). Residues 189–207 form a linker 1 region; it reads YDKKGPAAIQKNYSPYYNT. Residues 208 to 299 form a coil 1B region; it reads IDDLKDQIVD…KNHKEEMSQL (92 aa). The interval 300–322 is linker 12; sequence TGQNSGDVNVEINVAPGKDLTKT. Positions 323–461 are coil 2; sequence LNDMRQEYEQ…ETYHNLLEGG (139 aa). Disordered stretches follow at residues 462-496 and 534-623; these read QEDFESSGAGKIGLGGRGGSGGSYGRGSRGGSGGS and YGGG…SSHS. The tail stretch occupies residues 462-623; it reads QEDFESSGAG…GGGSGKSSHS (162 aa). The segment covering 471 to 496 has biased composition (gly residues); sequence GKIGLGGRGGSGGSYGRGSRGGSGGS.

This sequence belongs to the intermediate filament family. Heterotetramer of two type I and two type II keratins. As to expression, expressed in the terminally differentiated epidermis of palms and soles.

Its function is as follows. May serve an important special function either in the mature palmar and plantar skin tissue or in the morphogenetic program of the formation of these tissues. Plays a role in keratin filament assembly. This chain is Keratin, type I cytoskeletal 9 (KRT9), found in Homo sapiens (Human).